The primary structure comprises 462 residues: tRNA-2-methylthio-N(6)-dimethylallyladenosine synthase (462 aa).

Residues Met-1–Ala-116 form the MTTase N-terminal domain. [4Fe-4S] cluster-binding residues include Cys-10, Cys-47, Cys-79, Cys-148, Cys-152, and Cys-155. The region spanning Gln-134–Lys-370 is the Radical SAM core domain. Residues Gln-372–Asn-436 form the TRAM domain.

This sequence belongs to the methylthiotransferase family. MiaB subfamily. In terms of assembly, monomer. It depends on [4Fe-4S] cluster as a cofactor.

It localises to the cytoplasm. The enzyme catalyses N(6)-dimethylallyladenosine(37) in tRNA + (sulfur carrier)-SH + AH2 + 2 S-adenosyl-L-methionine = 2-methylsulfanyl-N(6)-dimethylallyladenosine(37) in tRNA + (sulfur carrier)-H + 5'-deoxyadenosine + L-methionine + A + S-adenosyl-L-homocysteine + 2 H(+). In terms of biological role, catalyzes the methylthiolation of N6-(dimethylallyl)adenosine (i(6)A), leading to the formation of 2-methylthio-N6-(dimethylallyl)adenosine (ms(2)i(6)A) at position 37 in tRNAs that read codons beginning with uridine. The protein is tRNA-2-methylthio-N(6)-dimethylallyladenosine synthase of Helicobacter hepaticus (strain ATCC 51449 / 3B1).